Here is a 124-residue protein sequence, read N- to C-terminus: Protein S100-A16 (124 aa).

The EF-hand 1; degenerate domain occupies 23–37 (VSKHSLVKNKISKSS). Residues 54–89 (GNRKAADKLIQNLDANHDGRICFDEYWTMIGGITSP) form the EF-hand 2 domain. D67, N69, D71, R73, and E78 together coordinate Ca(2+). Positions 97–124 (QECQQESQQECQQESQQESQQESQQGSS) are disordered.

Belongs to the S-100 family. Homodimer. Interacts with TP53. In terms of tissue distribution, ubiquitous. Widely distributed throughout the adult brain and predominantly expressed within specific astrocyte populations. Expressed at high level in adipose tissues of obese animals.

It is found in the nucleus. The protein resides in the nucleolus. The protein localises to the cytoplasm. Functionally, calcium-binding protein. Binds one calcium ion per monomer. Can promote differentiation of adipocytes (in vitro). Overexpression in 3T3-L1 preadipocytes increases their proliferation, enhances adipogenesis and reduces insulin-stimulated glucose uptake. In Mus musculus (Mouse), this protein is Protein S100-A16.